Reading from the N-terminus, the 321-residue chain is Tetraketide alpha-pyrone reductase 2 (321 aa).

The residue at position 2 (Ser2) is an N-acetylserine. NADP(+)-binding positions include 4–28 (YLVTGGTGFIASYIIKSLLELGHTV), Lys40, and Tyr160.

Belongs to the NAD(P)-dependent epimerase/dehydratase family. Dihydroflavonol-4-reductase subfamily.

It is found in the cytoplasm. In terms of biological role, may be involved in the biosynthesis of hydroxylated tetraketide compounds that serve as sporopollenin precursors (the main constituents of exine). Acts on tetraketide alpha-pyrones and reduces the carbonyl function on the tetraketide alkyl chain to a secondary alcohol function. This Arabidopsis thaliana (Mouse-ear cress) protein is Tetraketide alpha-pyrone reductase 2 (TKPR2).